The chain runs to 341 residues: Flap endonuclease 1 (341 aa).

The segment at 1–98 is N-domain; sequence MGVQIGELIP…RELEKRREAR (98 aa). Residues D27, D80, E152, E154, D173, D175, and D236 each contribute to the Mg(2+) site. The I-domain stretch occupies residues 116 to 258; sequence EAKKYAMRAT…KALTIVKRTK (143 aa). The tract at residues 330–338 is interaction with PCNA; sequence KQSTLESWF.

It belongs to the XPG/RAD2 endonuclease family. FEN1 subfamily. As to quaternary structure, interacts with PCNA. PCNA stimulates the nuclease activity without altering cleavage specificity. Mg(2+) is required as a cofactor.

Structure-specific nuclease with 5'-flap endonuclease and 5'-3' exonuclease activities involved in DNA replication and repair. During DNA replication, cleaves the 5'-overhanging flap structure that is generated by displacement synthesis when DNA polymerase encounters the 5'-end of a downstream Okazaki fragment. Binds the unpaired 3'-DNA end and kinks the DNA to facilitate 5' cleavage specificity. Cleaves one nucleotide into the double-stranded DNA from the junction in flap DNA, leaving a nick for ligation. Also involved in the base excision repair (BER) pathway. Acts as a genome stabilization factor that prevents flaps from equilibrating into structures that lead to duplications and deletions. Also possesses 5'-3' exonuclease activity on nicked or gapped double-stranded DNA. This Thermococcus onnurineus (strain NA1) protein is Flap endonuclease 1.